Here is a 387-residue protein sequence, read N- to C-terminus: Type 2 DNA topoisomerase 6 subunit A (387 aa).

A Topo IIA-type catalytic domain is found at Glu-12–Lys-160. Tyr-106 serves as the catalytic O-(5'-phospho-DNA)-tyrosine intermediate. Mg(2+) contacts are provided by Glu-207 and Asp-259.

It belongs to the TOP6A family. In terms of assembly, homodimer. Heterotetramer of two Top6A and two Top6B chains. The cofactor is Mg(2+).

It catalyses the reaction ATP-dependent breakage, passage and rejoining of double-stranded DNA.. In terms of biological role, relaxes both positive and negative superturns and exhibits a strong decatenase activity. The protein is Type 2 DNA topoisomerase 6 subunit A of Sulfurisphaera tokodaii (strain DSM 16993 / JCM 10545 / NBRC 100140 / 7) (Sulfolobus tokodaii).